The sequence spans 409 residues: Probable type I inositol 1,4,5-trisphosphate 5-phosphatase (409 aa).

This sequence belongs to the inositol 1,4,5-trisphosphate 5-phosphatase type I family.

The catalysed reaction is 1D-myo-inositol 1,4,5-trisphosphate + H2O = 1D-myo-inositol 1,4-bisphosphate + phosphate. It catalyses the reaction 1D-myo-inositol 1,3,4,5-tetrakisphosphate + H2O = 1D-myo-inositol 1,3,4-trisphosphate + phosphate. The chain is Probable type I inositol 1,4,5-trisphosphate 5-phosphatase (ipp-5) from Caenorhabditis elegans.